The sequence spans 544 residues: Nucleosome assembly protein 1-like 3 (544 aa).

2 disordered regions span residues 1-109 (MAEA…LFLD) and 168-345 (PTEE…KKED). A compositionally biased stretch (low complexity) spans 35 to 83 (SNSSSSTNSCSSSGSSSSGSSSSSSSSSSSSSSSSSSSSGSSGSSSNGS). A compositionally biased stretch (acidic residues) spans 168 to 192 (PTEEECEWNSEEEFSGDEEMQDDTP). Basic and acidic residues-rich tracts occupy residues 207 to 228 (CNEK…PEAK), 235 to 277 (PKET…KADS), and 314 to 332 (PARE…EGVN).

It belongs to the nucleosome assembly protein (NAP) family. Expressed in brain.

It localises to the nucleus. The protein resides in the cytoplasm. The sequence is that of Nucleosome assembly protein 1-like 3 (Nap1l3) from Mus musculus (Mouse).